A 522-amino-acid polypeptide reads, in one-letter code: Colicin-E1 (522 aa).

Disordered stretches follow at residues 26-52 (NGTPDGSGSGGGGGKGGSKSESSAAIH) and 136-165 (EEKARKEAEAAEKAFQEAEQRRKEIEREKA). Over residues 30-42 (DGSGSGGGGGKGG) the composition is skewed to gly residues. Helical transmembrane passes span 471-487 (AADAGVSYVVALLFSLL) and 494-510 (IWGIAIVTGILCSYIDK).

It belongs to the channel forming colicin family.

The protein resides in the cell membrane. Its function is as follows. This colicin is a channel-forming colicin. This class of transmembrane toxins depolarize the cytoplasmic membrane, leading to dissipation of cellular energy. Colicins are polypeptide toxins produced by and active against E.coli and closely related bacteria. This chain is Colicin-E1 (cea), found in Escherichia coli.